A 552-amino-acid chain; its full sequence is Chaperonin GroEL (552 aa).

Residues 30-33 (TLGP), Lys-51, 87-91 (DGTTT), Gly-415, and Asp-499 each bind ATP.

This sequence belongs to the chaperonin (HSP60) family. In terms of assembly, forms a cylinder of 14 subunits composed of two heptameric rings stacked back-to-back. Interacts with the co-chaperonin GroES.

It is found in the cytoplasm. The catalysed reaction is ATP + H2O + a folded polypeptide = ADP + phosphate + an unfolded polypeptide.. Functionally, together with its co-chaperonin GroES, plays an essential role in assisting protein folding. The GroEL-GroES system forms a nano-cage that allows encapsulation of the non-native substrate proteins and provides a physical environment optimized to promote and accelerate protein folding. The polypeptide is Chaperonin GroEL (Hamiltonella defensa subsp. Acyrthosiphon pisum (strain 5AT)).